The following is a 398-amino-acid chain: Cysteine desulfurase 2 (398 aa).

Residues 71–72 (GT), Asn-150, Gln-178, and 198–200 (SGH) contribute to the pyridoxal 5'-phosphate site. The residue at position 201 (Lys-201) is an N6-(pyridoxal phosphate)lysine. Pyridoxal 5'-phosphate is bound at residue Thr-236. The active-site Cysteine persulfide intermediate is the Cys-323. Residue Cys-323 coordinates [2Fe-2S] cluster.

This sequence belongs to the class-V pyridoxal-phosphate-dependent aminotransferase family. NifS/IscS subfamily. As to quaternary structure, homodimer. It depends on pyridoxal 5'-phosphate as a cofactor.

It catalyses the reaction (sulfur carrier)-H + L-cysteine = (sulfur carrier)-SH + L-alanine. Its function is as follows. Catalyzes the removal of elemental sulfur atoms from cysteine to produce alanine. Seems to participate in the biosynthesis of the nitrogenase metalloclusters by providing the inorganic sulfur required for the Fe-S core formation. The protein is Cysteine desulfurase 2 of Trichormus variabilis (strain ATCC 29413 / PCC 7937) (Anabaena variabilis).